A 227-amino-acid polypeptide reads, in one-letter code: DNA repair protein RecO (227 aa).

It belongs to the RecO family.

Functionally, involved in DNA repair and RecF pathway recombination. This is DNA repair protein RecO from Pseudomonas entomophila (strain L48).